The primary structure comprises 497 residues: 4,4'-diaponeurosporene oxygenase (497 aa).

7–19 (VIGGGLGGISAAI) contributes to the FAD binding site.

It belongs to the carotenoid/retinoid oxidoreductase family. CrtP subfamily. It depends on FAD as a cofactor.

The catalysed reaction is all-trans-4,4'-diaponeurosporene + 2 AH2 + 2 O2 = 4,4'-diaponeurosporenal + 2 A + 3 H2O. It participates in carotenoid biosynthesis; staphyloxanthin biosynthesis; staphyloxanthin from farnesyl diphosphate: step 3/5. Involved in the biosynthesis of the yellow-orange carotenoid staphyloxanthin, which plays a role in the virulence via its protective function against oxidative stress. Catalyzes the oxidation of the terminal methyl side group of 4,4'-diaponeurosporene to form 4,4'-diaponeurosporen-4-al. The chain is 4,4'-diaponeurosporene oxygenase from Staphylococcus aureus (strain MW2).